A 388-amino-acid polypeptide reads, in one-letter code: Galactokinase (388 aa).

Residue 33–36 coordinates substrate; it reads EHTD. ATP-binding positions include S67 and 124 to 130; that span reads GSGLSSS. Mg(2+)-binding residues include S130 and E162. D174 functions as the Proton acceptor in the catalytic mechanism. Y224 lines the substrate pocket.

It belongs to the GHMP kinase family. GalK subfamily.

It localises to the cytoplasm. It catalyses the reaction alpha-D-galactose + ATP = alpha-D-galactose 1-phosphate + ADP + H(+). Its pathway is carbohydrate metabolism; galactose metabolism. Catalyzes the transfer of the gamma-phosphate of ATP to D-galactose to form alpha-D-galactose-1-phosphate (Gal-1-P). This chain is Galactokinase, found in Streptococcus thermophilus (strain ATCC BAA-491 / LMD-9).